The primary structure comprises 217 residues: Somatotropin (217 aa).

The N-terminal stretch at 1-26 is a signal peptide; the sequence is MMAAGPRTSLLLAFALLCLPWTQVVG. Residue histidine 46 coordinates Zn(2+). Cysteine 79 and cysteine 190 form a disulfide bridge. Serine 132 is modified (phosphoserine). Residue glutamate 199 participates in Zn(2+) binding. Residues cysteine 207 and cysteine 215 are joined by a disulfide bond.

It belongs to the somatotropin/prolactin family.

Its subcellular location is the secreted. In terms of biological role, plays an important role in growth control. Its major role in stimulating body growth is to stimulate the liver and other tissues to secrete IGF1. It stimulates both the differentiation and proliferation of myoblasts. It also stimulates amino acid uptake and protein synthesis in muscle and other tissues. The polypeptide is Somatotropin (GH1) (Bubalus bubalis (Domestic water buffalo)).